The following is a 172-amino-acid chain: Resuscitation-promoting factor RpfE (172 aa).

An N-terminal signal peptide occupies residues 1 to 28; it reads MKNARTTLIAAAIAGTLVTTSPAGIANA. Residues 33–89 form a disordered region; that stretch reads LDPNAAAGPDAVGFDPNLPPAPDAAPVDTPPAPEDAGFDPNLPPPLAPDFLSPPAEE. Residues 49–65 are compositionally biased toward pro residues; the sequence is NLPPAPDAAPVDTPPAP.

This sequence belongs to the transglycosylase family. Rpf subfamily. As to quaternary structure, interacts with RipA.

Its function is as follows. Factor that stimulates resuscitation of dormant cells. Has peptidoglycan (PG) hydrolytic activity. Active in the pM concentration range. Has little to no effect on actively-growing cells. PG fragments could either directly activate the resuscitation pathway of dormant bacteria or serve as a substrate for endogenous Rpf, resulting in low molecular weight products with resuscitation activity. Functionally, stimulates growth of stationary phase M.bovis (a slow-growing Mycobacterium), reduces the lag phase of diluted fast-growers M.smegmatis and Micrococcus luteus. Sequential gene disruption indicates RpfB and RpfE are higher than RpfD and RpfC in functional hierarchy. The sequence is that of Resuscitation-promoting factor RpfE (rpfE) from Mycobacterium tuberculosis (strain ATCC 25618 / H37Rv).